The primary structure comprises 227 residues: Cytochrome c oxidase subunit 2 (227 aa).

Over 1–14 (MAYPMQLGFQDATS) the chain is Mitochondrial intermembrane. A helical transmembrane segment spans residues 15 to 45 (PIMEELLHFHDHTLMIVFLISSLVLYIISLM). Topologically, residues 46–59 (LTTKLTHTSTMDAQ) are mitochondrial matrix. The chain crosses the membrane as a helical span at residues 60-87 (EVETIWTILPAIILILIALPSLRILYMM). Residues 88–227 (DEINNPSLTV…YFEKWSASML (140 aa)) are Mitochondrial intermembrane-facing. 6 residues coordinate Cu cation: His-161, Cys-196, Glu-198, Cys-200, His-204, and Met-207. Glu-198 is a binding site for Mg(2+). Tyr-218 is subject to Phosphotyrosine.

Belongs to the cytochrome c oxidase subunit 2 family. As to quaternary structure, component of the cytochrome c oxidase (complex IV, CIV), a multisubunit enzyme composed of 14 subunits. The complex is composed of a catalytic core of 3 subunits MT-CO1, MT-CO2 and MT-CO3, encoded in the mitochondrial DNA, and 11 supernumerary subunits COX4I, COX5A, COX5B, COX6A, COX6B, COX6C, COX7A, COX7B, COX7C, COX8 and NDUFA4, which are encoded in the nuclear genome. The complex exists as a monomer or a dimer and forms supercomplexes (SCs) in the inner mitochondrial membrane with NADH-ubiquinone oxidoreductase (complex I, CI) and ubiquinol-cytochrome c oxidoreductase (cytochrome b-c1 complex, complex III, CIII), resulting in different assemblies (supercomplex SCI(1)III(2)IV(1) and megacomplex MCI(2)III(2)IV(2)). Found in a complex with TMEM177, COA6, COX18, COX20, SCO1 and SCO2. Interacts with TMEM177 in a COX20-dependent manner. Interacts with COX20. Interacts with COX16. Cu cation serves as cofactor.

The protein localises to the mitochondrion inner membrane. It catalyses the reaction 4 Fe(II)-[cytochrome c] + O2 + 8 H(+)(in) = 4 Fe(III)-[cytochrome c] + 2 H2O + 4 H(+)(out). Component of the cytochrome c oxidase, the last enzyme in the mitochondrial electron transport chain which drives oxidative phosphorylation. The respiratory chain contains 3 multisubunit complexes succinate dehydrogenase (complex II, CII), ubiquinol-cytochrome c oxidoreductase (cytochrome b-c1 complex, complex III, CIII) and cytochrome c oxidase (complex IV, CIV), that cooperate to transfer electrons derived from NADH and succinate to molecular oxygen, creating an electrochemical gradient over the inner membrane that drives transmembrane transport and the ATP synthase. Cytochrome c oxidase is the component of the respiratory chain that catalyzes the reduction of oxygen to water. Electrons originating from reduced cytochrome c in the intermembrane space (IMS) are transferred via the dinuclear copper A center (CU(A)) of subunit 2 and heme A of subunit 1 to the active site in subunit 1, a binuclear center (BNC) formed by heme A3 and copper B (CU(B)). The BNC reduces molecular oxygen to 2 water molecules using 4 electrons from cytochrome c in the IMS and 4 protons from the mitochondrial matrix. The chain is Cytochrome c oxidase subunit 2 (MT-CO2) from Syncerus caffer (African buffalo).